We begin with the raw amino-acid sequence, 346 residues long: UPF0421 protein OB2406 (346 aa).

The next 4 membrane-spanning stretches (helical) occupy residues 16–36, 55–75, 102–122, and 128–148; these read IAVLLTAYICEWIGWSPVFAV, LIRFPASAIGAAYAVLFIALF, LLVATITSVAMVDVIHSNYVM, and LFTTTIGLSVSTLVNMFLLPP.

It belongs to the UPF0421 family.

The protein localises to the cell membrane. The sequence is that of UPF0421 protein OB2406 from Oceanobacillus iheyensis (strain DSM 14371 / CIP 107618 / JCM 11309 / KCTC 3954 / HTE831).